The following is a 417-amino-acid chain: Probable secreted aspartic protease ARB_07536 (417 aa).

The first 20 residues, 1 to 20, serve as a signal peptide directing secretion; it reads MRGILILVALGAATIPQASA. In terms of domain architecture, Peptidase A1 spans 42–413; sequence NTDLVTIGTP…DFEKNRVGLA (372 aa). N-linked (GlcNAc...) asparagine glycans are attached at residues asparagine 74, asparagine 91, asparagine 100, asparagine 170, asparagine 276, and asparagine 314. Cysteine 333 and cysteine 373 are disulfide-bonded.

This sequence belongs to the peptidase A1 family.

The protein resides in the secreted. Its function is as follows. Probable secreted aspartic protease that supplies the fungus with nutrient amino acids. May be able to degrade the selected host's proteins involved in the immune defense. In Arthroderma benhamiae (strain ATCC MYA-4681 / CBS 112371) (Trichophyton mentagrophytes), this protein is Probable secreted aspartic protease ARB_07536.